We begin with the raw amino-acid sequence, 76 residues long: Protein CASC2, isoforms 1/2 (76 aa).

Positions 1 to 20 (MAGTRGLMLLGPGPVAGPRD) are disordered.

This Homo sapiens (Human) protein is Protein CASC2, isoforms 1/2 (CASC2).